Reading from the N-terminus, the 325-residue chain is Sel1-repeat-containing protein YbeQ (325 aa).

8 Sel1-like repeats span residues 26–61 (EAQY…EQGH), 63–97 (EAQY…LQGH), 103–130 (ALGW…AESG), 132–167 (SYAQ…LQGH), 168–203 (SDAQ…QQGN), 205–239 (HAQF…AQGS), 242–275 (AYVN…ECND), and 280–305 (YNLA…LYRK).

This sequence to E.coli YbeT.

This is Sel1-repeat-containing protein YbeQ (ybeQ) from Escherichia coli (strain K12).